The sequence spans 431 residues: 4-hydroxy-3-methylbut-2-en-1-yl diphosphate synthase (flavodoxin) (431 aa).

Over residues 1 to 12 (MNKLENPLRDDV) the composition is skewed to basic and acidic residues. The disordered stretch occupies residues 1-20 (MNKLENPLRDDVAGPAPRHQ). Positions 310, 313, 356, and 363 each coordinate [4Fe-4S] cluster.

It belongs to the IspG family. The cofactor is [4Fe-4S] cluster.

It carries out the reaction (2E)-4-hydroxy-3-methylbut-2-enyl diphosphate + oxidized [flavodoxin] + H2O + 2 H(+) = 2-C-methyl-D-erythritol 2,4-cyclic diphosphate + reduced [flavodoxin]. It participates in isoprenoid biosynthesis; isopentenyl diphosphate biosynthesis via DXP pathway; isopentenyl diphosphate from 1-deoxy-D-xylulose 5-phosphate: step 5/6. In terms of biological role, converts 2C-methyl-D-erythritol 2,4-cyclodiphosphate (ME-2,4cPP) into 1-hydroxy-2-methyl-2-(E)-butenyl 4-diphosphate. The protein is 4-hydroxy-3-methylbut-2-en-1-yl diphosphate synthase (flavodoxin) of Rhodopseudomonas palustris (strain TIE-1).